The following is an 899-amino-acid chain: DNA mismatch repair protein MutS (899 aa).

The disordered stretch occupies residues 1 to 20 (MGLQKKTDPEQAQADSAASR). 631–638 (GPNMGGKS) provides a ligand contact to ATP. Residues 832-852 (PPTPDDDEDDFGAAPSAVPAP) are disordered. Residues 843-852 (GAAPSAVPAP) show a composition bias toward low complexity.

This sequence belongs to the DNA mismatch repair MutS family.

This protein is involved in the repair of mismatches in DNA. It is possible that it carries out the mismatch recognition step. This protein has a weak ATPase activity. In Cupriavidus necator (strain ATCC 17699 / DSM 428 / KCTC 22496 / NCIMB 10442 / H16 / Stanier 337) (Ralstonia eutropha), this protein is DNA mismatch repair protein MutS.